A 249-amino-acid chain; its full sequence is V-type proton ATPase subunit D 2 (249 aa).

Belongs to the V-ATPase D subunit family. In terms of assembly, V-ATPase is a heteromultimeric enzyme made up of two complexes: the ATP-hydrolytic V1 complex and the proton translocation V0 complex. The V1 complex consists of three catalytic AB heterodimers that form a heterohexamer, three peripheral stalks each consisting of EG heterodimers, one central rotor including subunits D and F, and the regulatory subunits C and H. The proton translocation complex V0 consists of the proton transport subunit a, a ring of proteolipid subunits c9c'', rotary subunit d, subunits e and f, and the accessory subunits VhaAC45 and ATP6AP2.

Subunit of the V1 complex of vacuolar(H+)-ATPase (V-ATPase), a multisubunit enzyme composed of a peripheral complex (V1) that hydrolyzes ATP and a membrane integral complex (V0) that translocates protons. V-ATPase is responsible for acidifying and maintaining the pH of intracellular compartments and in some cell types, is targeted to the plasma membrane, where it is responsible for acidifying the extracellular environment. The polypeptide is V-type proton ATPase subunit D 2 (Vha36-3) (Drosophila melanogaster (Fruit fly)).